Consider the following 134-residue polypeptide: Profilin-1 (134 aa).

Cysteine 13 and cysteine 118 are joined by a disulfide. Residues 84-100 (AVVRGKKGSGGITIKKT) carry the Involved in PIP2 interaction motif. A Phosphothreonine modification is found at threonine 114.

The protein belongs to the profilin family. As to quaternary structure, occurs in many kinds of cells as a complex with monomeric actin in a 1:1 ratio. Phosphorylated by MAP kinases.

It is found in the cytoplasm. It localises to the cytoskeleton. Functionally, binds to actin and affects the structure of the cytoskeleton. At high concentrations, profilin prevents the polymerization of actin, whereas it enhances it at low concentrations. The polypeptide is Profilin-1 (Olea europaea (Common olive)).